The chain runs to 137 residues: Large ribosomal subunit protein uL16 (137 aa).

Belongs to the universal ribosomal protein uL16 family. In terms of assembly, part of the 50S ribosomal subunit.

Binds 23S rRNA and is also seen to make contacts with the A and possibly P site tRNAs. This Chlamydia abortus (strain DSM 27085 / S26/3) (Chlamydophila abortus) protein is Large ribosomal subunit protein uL16.